Reading from the N-terminus, the 164-residue chain is Transcription elongation factor GreA (164 aa).

Residues 50–76 (YHAAREEQGQQEARIRQLQDLLSNAKV) are a coiled coil.

It belongs to the GreA/GreB family.

In terms of biological role, necessary for efficient RNA polymerase transcription elongation past template-encoded arresting sites. The arresting sites in DNA have the property of trapping a certain fraction of elongating RNA polymerases that pass through, resulting in locked ternary complexes. Cleavage of the nascent transcript by cleavage factors such as GreA or GreB allows the resumption of elongation from the new 3'terminus. GreA releases sequences of 2 to 3 nucleotides. This is Transcription elongation factor GreA from Mycobacterium bovis (strain ATCC BAA-935 / AF2122/97).